Reading from the N-terminus, the 227-residue chain is Prolactin (227 aa).

The N-terminal stretch at 1 to 28 (MNIKGSPWKGSLLLLLVSNLLLCQNVAP) is a signal peptide. C32 and C39 are joined by a disulfide. S54 bears the Phosphoserine mark. N59 carries an N-linked (GlcNAc...) asparagine glycan. A phosphoserine mark is found at S62 and S118. 2 disulfide bridges follow: C86–C202 and C219–C227.

Belongs to the somatotropin/prolactin family. As to quaternary structure, interacts with PRLR.

Its subcellular location is the secreted. Functionally, prolactin acts primarily on the mammary gland by promoting lactation. This chain is Prolactin (PRL), found in Macaca mulatta (Rhesus macaque).